Consider the following 205-residue polypeptide: Protein phosphatase inhibitor 2 family member C (205 aa).

Disordered regions lie at residues 1 to 51 (MSAS…DESS) and 70 to 114 (EPGT…DHSC). Positions 12-17 (KGILKN) are required for binding PPP1CC. A compositionally biased stretch (low complexity) spans 19–34 (SSSGSSVATSGQQSGG). Residues 43 to 55 (KSQKWDESSILAT) are required for binding PPP1CC. Over residues 84-102 (DSVRDVEGEDSVRGVEGKE) the composition is skewed to basic and acidic residues. Residues 147-150 (HYNE) form a required for binding PPP1CC catalytic center, displacing metal ions and inhibition of PPP1CC catalytic activity region. Residues 165 to 205 (LQSEDDENEERPQATNEEKTAAEESEEAPLSGGLQTQSCDP) form a disordered region. Positions 174 to 186 (ERPQATNEEKTAA) are enriched in basic and acidic residues.

The protein belongs to the protein phosphatase inhibitor 2 family.

Functions as a protein phosphatase inhibitor. It inhibits activity of the catalytic subunit of PP1 and weakly inhibits the activity of myosin-associated phosphates. The polypeptide is Protein phosphatase inhibitor 2 family member C (PPP1R2C) (Macaca fascicularis (Crab-eating macaque)).